The following is a 438-amino-acid chain: Glyceraldehyde-3-phosphate dehydrogenase B, chloroplastic (438 aa).

The N-terminal 53 residues, 1–53, are a transit peptide targeting the chloroplast; sequence CLSKKFEVAEFAGLRSSGCVTFSNKESSFFDVVSAQLTPKTTRSTPVKGETVA. NADP(+)-binding positions include 64 to 65, Asp88, and Arg133; that span reads RI. Residues 207–209, Thr238, Arg253, 266–267, and Arg289 each bind D-glyceraldehyde 3-phosphate; these read SCT and TG. Cys208 serves as the catalytic Nucleophile. Asn372 contacts NADP(+).

The protein belongs to the glyceraldehyde-3-phosphate dehydrogenase family. In terms of assembly, tetramer of either four A chains (GAPDH 2) or two A and two B chains (GAPDH 1).

The protein localises to the plastid. Its subcellular location is the chloroplast. It catalyses the reaction D-glyceraldehyde 3-phosphate + phosphate + NADP(+) = (2R)-3-phospho-glyceroyl phosphate + NADPH + H(+). It functions in the pathway carbohydrate biosynthesis; Calvin cycle. The chain is Glyceraldehyde-3-phosphate dehydrogenase B, chloroplastic (GAPB) from Nicotiana tabacum (Common tobacco).